A 390-amino-acid chain; its full sequence is Phosphopentomutase (390 aa).

Mn(2+) is bound by residues D10, D282, H287, D323, H324, and H335.

Belongs to the phosphopentomutase family. The cofactor is Mn(2+).

The protein localises to the cytoplasm. It catalyses the reaction 2-deoxy-alpha-D-ribose 1-phosphate = 2-deoxy-D-ribose 5-phosphate. The catalysed reaction is alpha-D-ribose 1-phosphate = D-ribose 5-phosphate. It functions in the pathway carbohydrate degradation; 2-deoxy-D-ribose 1-phosphate degradation; D-glyceraldehyde 3-phosphate and acetaldehyde from 2-deoxy-alpha-D-ribose 1-phosphate: step 1/2. In terms of biological role, isomerase that catalyzes the conversion of deoxy-ribose 1-phosphate (dRib-1-P) and ribose 1-phosphate (Rib-1-P) to deoxy-ribose 5-phosphate (dRib-5-P) and ribose 5-phosphate (Rib-5-P), respectively. This is Phosphopentomutase from Lachnoclostridium phytofermentans (strain ATCC 700394 / DSM 18823 / ISDg) (Clostridium phytofermentans).